The chain runs to 131 residues: Profilin (131 aa).

Belongs to the profilin family. As to quaternary structure, occurs in many kinds of cells as a complex with monomeric actin in a 1:1 ratio.

It is found in the cytoplasm. The protein localises to the cytoskeleton. Functionally, binds to actin and affects the structure of the cytoskeleton. At high concentrations, profilin prevents the polymerization of actin, whereas it enhances it at low concentrations. By binding to PIP2, it inhibits the formation of IP3 and DG. The polypeptide is Profilin (Pyrus communis (Pear)).